The primary structure comprises 335 residues: MESIIDAHCHPTDAPQELHLVANLSVGKLIVMGTRPTDQKYVEQLAKEYPGKVIPSFGIHPWFSYYLYDDLDKDLQSSETRKKKHYEKILTPIPDEDFINALPNPVPISEFLEDARRHLKQYPNALIGEIGLDKPFRLPVGPYDARSSLPQGPLSPFYVKMEHQCKVFEAQVRLAAEFQRAVSVHCVQTYALLYSSLAKFWDGRWIPSKTKIRKMKKEEYENSLAEERKHYPPKICLHSYSGSIEQISQFSAHKVPTEFYYSFSIGINSRYKNFIQTLKGVPDDKLLAESDHHSASQIDELVRQSLNVMSEAKSWTFEDTITKISSNSKAFLKVT.

The protein belongs to the metallo-dependent hydrolases superfamily.

Functionally, interacts with cut9. In Schizosaccharomyces pombe (strain 972 / ATCC 24843) (Fission yeast), this protein is Cut9-interacting protein scn1 (scn1).